We begin with the raw amino-acid sequence, 350 residues long: Ion-translocating oxidoreductase complex subunit D (350 aa).

4 helical membrane-spanning segments follow: residues 37–57 (YFFGFGVLIQVMLAIVVALTA), 68–88 (AVLSTISDNSALLTAILIGVA), 89–109 (IPPIAPWWLVVIGTLFAIVLV), and 120–140 (IFNPAMAAYVMLLISFPVQMT). Threonine 185 is subject to FMN phosphoryl threonine. 5 helical membrane-spanning segments follow: residues 212–232 (GYGVGWFWVNMAYLAGGLIML), 239–259 (WHISFAILGSLFVCSSFGYLL), 265–285 (VGPLLQLFSGATMIAAFFIAT), 291–311 (ATSVKGRLLFGTLIGVMVYVI), and 315–335 (GGYPDAFAFAVLLANLCAPFI).

The protein belongs to the NqrB/RnfD family. The complex is composed of six subunits: RnfA, RnfB, RnfC, RnfD, RnfE and RnfG. Requires FMN as cofactor.

The protein resides in the cell inner membrane. Functionally, part of a membrane-bound complex that couples electron transfer with translocation of ions across the membrane. The protein is Ion-translocating oxidoreductase complex subunit D of Shewanella pealeana (strain ATCC 700345 / ANG-SQ1).